The primary structure comprises 119 residues: Small ribosomal subunit protein bS6 (119 aa).

The interval 96-119 (VTEPSPLARSQEKDEEEGGRTAEA) is disordered.

Belongs to the bacterial ribosomal protein bS6 family.

Binds together with bS18 to 16S ribosomal RNA. The protein is Small ribosomal subunit protein bS6 of Alkalilimnicola ehrlichii (strain ATCC BAA-1101 / DSM 17681 / MLHE-1).